The primary structure comprises 305 residues: Glycine--tRNA ligase alpha subunit (305 aa).

This sequence belongs to the class-II aminoacyl-tRNA synthetase family. In terms of assembly, tetramer of two alpha and two beta subunits.

Its subcellular location is the cytoplasm. The enzyme catalyses tRNA(Gly) + glycine + ATP = glycyl-tRNA(Gly) + AMP + diphosphate. The sequence is that of Glycine--tRNA ligase alpha subunit from Streptococcus pneumoniae (strain ATCC BAA-255 / R6).